A 68-amino-acid polypeptide reads, in one-letter code: Galectin-10 (68 aa).

The Galectin domain maps to 1–68 (EPYLQVDFHT…LSISVLPDKY (68 aa)).

As to quaternary structure, interacts with CEL.

It localises to the cytoplasm. The protein localises to the cytosol. Its subcellular location is the cytoplasmic granule. Functionally, regulates immune responses through the recognition of cell-surface glycans. Essential for the anergy and suppressive function of CD25-positive regulatory T-cells (Treg). The chain is Galectin-10 (CLC) from Pongo pygmaeus (Bornean orangutan).